Reading from the N-terminus, the 493-residue chain is Glycogen synthase 1 (493 aa).

Residue K15 coordinates ADP-alpha-D-glucose.

It belongs to the glycosyltransferase 1 family. Bacterial/plant glycogen synthase subfamily.

The enzyme catalyses [(1-&gt;4)-alpha-D-glucosyl](n) + ADP-alpha-D-glucose = [(1-&gt;4)-alpha-D-glucosyl](n+1) + ADP + H(+). It participates in glycan biosynthesis; glycogen biosynthesis. Synthesizes alpha-1,4-glucan chains using ADP-glucose. The sequence is that of Glycogen synthase 1 from Methylococcus capsulatus (strain ATCC 33009 / NCIMB 11132 / Bath).